The sequence spans 83 residues: Large ribosomal subunit protein eL43 (83 aa).

Residues C38, C41, C56, and C59 each coordinate Zn(2+). Residues 38–59 (CPVCGRRAVKRISTGIWQCTKC) form a C4-type zinc finger.

Belongs to the eukaryotic ribosomal protein eL43 family. Putative zinc-binding subfamily. Part of the 50S ribosomal subunit. Zn(2+) is required as a cofactor.

Its function is as follows. Binds to the 23S rRNA. This is Large ribosomal subunit protein eL43 from Pyrococcus horikoshii (strain ATCC 700860 / DSM 12428 / JCM 9974 / NBRC 100139 / OT-3).